A 925-amino-acid polypeptide reads, in one-letter code: GPI ethanolamine phosphate transferase 1 (925 aa).

At 1-6 (MWNKHR) the chain is on the cytoplasmic side. Residues 7–27 (LAFILVGLLFHLFYLRSIFDI) form a helical membrane-spanning segment. The Lumenal segment spans residues 28–457 (YFVSPLVHGM…TTYNWRFIRS (430 aa)). Asparagine 90, asparagine 138, asparagine 198, asparagine 286, asparagine 312, and asparagine 358 each carry an N-linked (GlcNAc...) asparagine glycan. A helical transmembrane segment spans residues 458 to 478 (IVTLGFIGWITYSFTIFLRLF). At 479-492 (ILEKQYAMKTSPQN) the chain is on the cytoplasmic side. A helical membrane pass occupies residues 493 to 510 (LASFGALTAALNYVLYYQ). The Lumenal segment spans residues 511-516 (RSPFNY). Residues 517-537 (YMYLLFPLFFWSQILTNSTIL) form a helical membrane-spanning segment. The Cytoplasmic segment spans residues 538–547 (HDGIREMFKG). Residues 548 to 568 (VSMLQRIGICALIVSIYEGIV) form a helical membrane-spanning segment. The Lumenal segment spans residues 569–574 (YGYFDR). The helical transmembrane segment at 575–595 (WIFTIIFNLLALYPFFCGIKD) threads the bilayer. Residues 596–599 (AKTN) lie on the Cytoplasmic side of the membrane. The helical transmembrane segment at 600–620 (MFWGANSMALSIFTLFDAVKI) threads the bilayer. Glutamate 621 is a topological domain (lumenal). Residues 622-642 (SLTQINVSGLLLVASGLYALW) form a helical membrane-spanning segment. The Cytoplasmic segment spans residues 643-653 (RVSKKINSHTK). The helical transmembrane segment at 654 to 674 (IVILLQILLLAMMLAVTNKSV) threads the bilayer. Over 675–687 (TSLQQRAGLPTDA) the chain is Lumenal. A helical membrane pass occupies residues 688-708 (KIAGWVILTLSLSLMPLLHYL). The Cytoplasmic segment spans residues 709-719 (KPSNDYQVRVL). The helical transmembrane segment at 720–740 (VIYLTFAPTFLILTISFESFF) threads the bilayer. Topologically, residues 741–775 (YLLFTNYLMLWIEIESKIKAQNIAKNSQNWLQLLR) are lumenal. Residues 776–796 (ISIIGFFLLQFAFFGTGNVAS) form a helical membrane-spanning segment. Residues 797–818 (ISSFSLDSVYRLMPVFDPFPMG) lie on the Cytoplasmic side of the membrane. The chain crosses the membrane as a helical span at residues 819-839 (ALLILKIMIPYILLSTALGIM). The Lumenal segment spans residues 840-848 (NLKLNIKDY). The chain crosses the membrane as a helical span at residues 849 to 869 (TVSSLILSTSDVLSLNFFYLL). Over 870–885 (RTEGSWLDIGVTISNY) the chain is Cytoplasmic. The helical transmembrane segment at 886 to 906 (CLAILSSLFMIVLELFSHFLL) threads the bilayer. The Lumenal portion of the chain corresponds to 907-925 (KNVRDNGMDIAASKQQKRH).

The protein belongs to the PIGG/PIGN/PIGO family. PIGN subfamily.

The protein localises to the endoplasmic reticulum membrane. The protein operates within glycolipid biosynthesis; glycosylphosphatidylinositol-anchor biosynthesis. Ethanolamine phosphate transferase involved in glycosylphosphatidylinositol-anchor biosynthesis. Transfers ethanolamine phosphate to the first alpha-1,4-linked mannose of the glycosylphosphatidylinositol precursor of GPI-anchor. The chain is GPI ethanolamine phosphate transferase 1 (MCD4) from Eremothecium gossypii (strain ATCC 10895 / CBS 109.51 / FGSC 9923 / NRRL Y-1056) (Yeast).